A 102-amino-acid polypeptide reads, in one-letter code: Large ribosomal subunit protein bL21 (102 aa).

It belongs to the bacterial ribosomal protein bL21 family. As to quaternary structure, part of the 50S ribosomal subunit. Contacts protein L20.

This protein binds to 23S rRNA in the presence of protein L20. The chain is Large ribosomal subunit protein bL21 from Bacillus cytotoxicus (strain DSM 22905 / CIP 110041 / 391-98 / NVH 391-98).